Consider the following 131-residue polypeptide: Leptin receptor overlapping transcript-like 1 (131 aa).

Transmembrane regions (helical) follow at residues 7-27 (LISL…GCAL), 32-52 (QYWP…YCIA), 69-89 (LAIF…IVFA), and 100-120 (ALVL…FLVF).

Belongs to the OB-RGRP/VPS55 family.

It is found in the membrane. Functionally, negatively regulates growth hormone (GH) receptor cell surface expression in liver. May play a role in liver resistance to GH during periods of reduced nutrient availability. In Bos taurus (Bovine), this protein is Leptin receptor overlapping transcript-like 1 (LEPROTL1).